The chain runs to 161 residues: MEFWESSAMPDDVKREIKEIYWEDRKKLLFCQKLKSYVRRILVYGDQEDALAGVKDMKTSIIRYSEYLKKPCVVICCVSNKSIVYRLNSMVFFYHEYLEELGGDYSVYQDLYCDEVLSSSSTEEEDVGVIYRNVIMASTQEKFSWSDCQQIVISDYDVTLL.

Positions 9-21 (MPDDVKREIKEIY) are binding to host SKP1 protein. Positions 111–115 (LYCDE) match the LXCXE motif, interaction with host RBR motif.

As to quaternary structure, interacts with host SKP1. Interacts (via LXCXE domain) with host retinoblastoma-related protein 2 (RBR2). Interacts (via LXCXE domain) with human RB1. Interacts (via LXCXE domain) with retinoblastoma-related proteins (RBR).

Functionally, interacts with and disrupts the function of host retinoblastoma-related proteins RBR, which are key regulators of the cell cycle. Induces transcriptional activation of E2F-regulated S-phase and G2/M-phase-specific genes. Inactivation of the ability of RBR to arrest the cell cycle leads to the stimulation of viral DNA replication. Acts as a suppressor of RNA-mediated gene silencing, also known as post-transcriptional gene silencing (PTGS), a mechanism of plant viral defense that limits the accumulation of viral RNAs. The sequence is that of Cell cycle link protein (DNA-C) from Musa (BBTV).